The chain runs to 602 residues: Isocitrate dehydrogenase kinase/phosphatase (602 aa).

ATP contacts are provided by residues 327 to 333 (APGIKGM) and lysine 348. Residue aspartate 383 is part of the active site.

The protein belongs to the AceK family.

It is found in the cytoplasm. The enzyme catalyses L-seryl-[isocitrate dehydrogenase] + ATP = O-phospho-L-seryl-[isocitrate dehydrogenase] + ADP + H(+). Bifunctional enzyme which can phosphorylate or dephosphorylate isocitrate dehydrogenase (IDH) on a specific serine residue. This is a regulatory mechanism which enables bacteria to bypass the Krebs cycle via the glyoxylate shunt in response to the source of carbon. When bacteria are grown on glucose, IDH is fully active and unphosphorylated, but when grown on acetate or ethanol, the activity of IDH declines drastically concomitant with its phosphorylation. The chain is Isocitrate dehydrogenase kinase/phosphatase from Paraburkholderia phymatum (strain DSM 17167 / CIP 108236 / LMG 21445 / STM815) (Burkholderia phymatum).